The primary structure comprises 246 residues: uncharacterized protein (246 aa).

Positions 1–24 (MGAPLRHCLLVAAALSLGCGVAAA) are cleaved as a signal peptide. A run of 2 helical transmembrane segments spans residues 71-91 (YYLGSISGKKVIVAMTGIGLV) and 104-124 (FTCASSIAIAAVMFSGVAGGA).

It localises to the cell membrane. This is an uncharacterized protein from Mycobacterium tuberculosis (strain ATCC 25618 / H37Rv).